Consider the following 369-residue polypeptide: MASVQLRNVTKAWGDVVVSKDINLDIHDGEFVVFVGPSGCGKSTLLRMIAGLETITSGDLFIGETRMNDIPPVERGVGMVFQSYALYPHLSVAENMSFGLKLAGAKKEVMNQRVNQVAEVLQLAHLLERKPKALSGGQRQRVAIGRTLVAEPRVFLLDEPLSNLDAALRVQMRIEISRLHKRLGRTMIYVTHDQVEAMTLADKIVVLDAGRVAQVGKPLELYHYPADRFVAGFIGSPKMNFLPVKVTATAIEQVQVELPNRQQIWLPVESRGVQVGANMSLGIRPEHLLPSDIADVTLEGEVQVVEQLGHETQIHIQIPAIRQNLVYRQNDVVLVEEGATFAIGLPPERCHLFREDGSACRRLHQEPGV.

Positions 4–234 (VQLRNVTKAW…PADRFVAGFI (231 aa)) constitute an ABC transporter domain. ATP is bound at residue 36–43 (GPSGCGKS).

This sequence belongs to the ABC transporter superfamily. Maltooligosaccharide importer (TC 3.A.1.1.1) family. The complex is composed of two ATP-binding proteins (MalK), two transmembrane proteins (MalG and MalK) and a solute-binding protein (MalE).

It localises to the cell inner membrane. It catalyses the reaction D-maltose(out) + ATP + H2O = D-maltose(in) + ADP + phosphate + H(+). In terms of biological role, part of the ABC transporter complex MalEFGK involved in maltose/maltodextrin import. Responsible for energy coupling to the transport system. The sequence is that of Maltose/maltodextrin import ATP-binding protein MalK from Salmonella paratyphi A (strain ATCC 9150 / SARB42).